Reading from the N-terminus, the 120-residue chain is Large ribosomal subunit protein uL18 (120 aa).

It belongs to the universal ribosomal protein uL18 family. Part of the 50S ribosomal subunit; part of the 5S rRNA/L5/L18/L25 subcomplex. Contacts the 5S and 23S rRNAs.

Functionally, this is one of the proteins that bind and probably mediate the attachment of the 5S RNA into the large ribosomal subunit, where it forms part of the central protuberance. This is Large ribosomal subunit protein uL18 from Staphylococcus carnosus (strain TM300).